The chain runs to 229 residues: Synaptogyrin-3 (229 aa).

N-acetylmethionine is present on M1. The MARVEL domain maps to F20–R172. 4 consecutive transmembrane segments (helical) span residues V30–N50, F70–V90, V105–F125, and A148–L168. The span at Q209–G223 shows a compositional bias: polar residues. A disordered region spans residues Q209–Y229.

Belongs to the synaptogyrin family. In terms of assembly, interacts (via N-terminus) with SLC6A3 (via N-terminus). May interact with VMAT2. Specifically expressed in brain. Found in the brain across the dorsal and ventral corpus striatum as well as in the cortex.

The protein localises to the cytoplasmic vesicle. Its subcellular location is the secretory vesicle. It localises to the synaptic vesicle membrane. It is found in the synapse. Functionally, may play a role in regulated exocytosis. May indirectly regulate the activity of the plasma membrane dopamine transporter SLC6A3 and thereby regulate dopamine transport back from the synaptic cleft into the presynaptic terminal. In Mus musculus (Mouse), this protein is Synaptogyrin-3.